The chain runs to 654 residues: ATP-dependent rRNA helicase spb-4 (654 aa).

The short motif at 17–45 (WDALTPPLAQWILDYLSSMGFTQPTPVQK) is the Q motif element. In terms of domain architecture, Helicase ATP-binding spans 48–249 (LELFRGNKDV…TVGLLYPHKI (202 aa)). ATP is bound at residue 61 to 68 (AVTGSGKT). The short motif at 197–200 (DEAD) is the DEAD box element. One can recognise a Helicase C-terminal domain in the interval 286–444 (AIVQLLEKLE…VTPDEVERVS (159 aa)). Residues 531–631 (REKKRQEELA…EERAAALAAN (101 aa)) are a coiled coil. The span at 542–577 (WKEEKAKRAQEENTGDKRKKNEAWSGKAEQEETKLQ) shows a compositional bias: basic and acidic residues. The segment at 542–654 (WKEEKAKRAQ…SDEEFGGFDD (113 aa)) is disordered. The segment covering 578 to 588 (RREKKRRKREA) has biased composition (basic residues). The segment covering 589 to 625 (KKFSEMTEKEKEEHLKLEQMIEEVRKRNEAKAAEERA) has biased composition (basic and acidic residues). A compositionally biased stretch (acidic residues) spans 644–654 (DSDEEFGGFDD).

Belongs to the DEAD box helicase family. DDX55/SPB4 subfamily. Component of pre-60S ribosomal complexes.

Its subcellular location is the nucleus. The protein resides in the nucleolus. The enzyme catalyses ATP + H2O = ADP + phosphate + H(+). Its function is as follows. ATP-binding RNA helicase involved in the biogenesis of 60S ribosomal subunits. Binds 90S pre-ribosomal particles and dissociates from pre-60S ribosomal particles after processing of 27SB pre-rRNA. Required for the normal formation of 18S rRNA through the processing of pre-rRNAs at sites A0, A1 and A2, and the normal formation of 25S and 5.8S rRNAs through the processing of pre-rRNAs at sites C1 and C2. In Neurospora crassa (strain ATCC 24698 / 74-OR23-1A / CBS 708.71 / DSM 1257 / FGSC 987), this protein is ATP-dependent rRNA helicase spb-4.